We begin with the raw amino-acid sequence, 303 residues long: MSSAPASGSVRARYLVYFQYVGTDFNGVAAVRGTQRAVGVQNYLEEAAERLNSVEPVRFTISSRTDAGVHALSNAAHLDVQRRSGRPPFPPEVLAEALNTHLRHPAIRVLRAFRVPSDFHARHAATSRTYLYRLATGCHRRDELPVFERNLCWTLPADCLDMVAMQEAAQHLLGTHDFSAFQSAGSPVPSPVRTLRRVSVSPGQASPLVTPEESRKLRFWNLEFESQSFLYRQVRRMTAVLVAVGLGALAPAQVKTILESQDPLGKHQTRVAPAHGLFLKSVLYGNLGAASCTLQGPQFGSHG.

The active-site Nucleophile is the Asp-66. Ser-84 bears the Phosphoserine mark. Tyr-130 contributes to the substrate binding site.

This sequence belongs to the tRNA pseudouridine synthase TruA family.

The catalysed reaction is a uridine in tRNA = a pseudouridine in tRNA. This chain is tRNA pseudouridine synthase-like 1 (PUSL1), found in Homo sapiens (Human).